Here is a 203-residue protein sequence, read N- to C-terminus: Ribonuclease HII (203 aa).

One can recognise an RNase H type-2 domain in the interval 15–201 (LLVAGLDEAG…VAQAPLRFPE (187 aa)). Asp21, Glu22, and Asp111 together coordinate a divalent metal cation.

The protein belongs to the RNase HII family. Mn(2+) is required as a cofactor. Mg(2+) serves as cofactor.

It is found in the cytoplasm. It carries out the reaction Endonucleolytic cleavage to 5'-phosphomonoester.. Endonuclease that specifically degrades the RNA of RNA-DNA hybrids. This Thermus thermophilus (strain ATCC BAA-163 / DSM 7039 / HB27) protein is Ribonuclease HII.